Consider the following 532-residue polypeptide: Protein FAM227B (532 aa).

A coiled-coil region spans residues 432–482; that stretch reads DNKKDFKRVKQRIKDDIKFLREQQELIDKELDRIQAKASKNLQEVKNEFEN. The segment at 494–532 is disordered; that stretch reads KEEYGGSTSASESPQSMQSPQSSSSFPTISEDFNNVEEG. The segment covering 500 to 523 has biased composition (low complexity); the sequence is STSASESPQSMQSPQSSSSFPTIS.

Belongs to the FAM227 family.

The sequence is that of Protein FAM227B (Fam227b) from Mus musculus (Mouse).